A 130-amino-acid chain; its full sequence is Small ribosomal subunit protein uS11c (130 aa).

It belongs to the universal ribosomal protein uS11 family. Part of the 30S ribosomal subunit.

It localises to the plastid. It is found in the chloroplast. This chain is Small ribosomal subunit protein uS11c, found in Marchantia polymorpha (Common liverwort).